The chain runs to 105 residues: UPF0235 protein RP839 (105 aa).

Belongs to the UPF0235 family.

The chain is UPF0235 protein RP839 from Rickettsia prowazekii (strain Madrid E).